The sequence spans 286 residues: Thymidylate synthase (286 aa).

Residue 140–141 coordinates dUMP; the sequence is RR. Catalysis depends on Cys161, which acts as the Nucleophile. DUMP contacts are provided by residues 185 to 188, Asn196, and 226 to 228; these read RSND and HIY. Asp188 provides a ligand contact to (6R)-5,10-methylene-5,6,7,8-tetrahydrofolate. Ala285 lines the (6R)-5,10-methylene-5,6,7,8-tetrahydrofolate pocket.

The protein belongs to the thymidylate synthase family. Bacterial-type ThyA subfamily. As to quaternary structure, homodimer.

It is found in the cytoplasm. It catalyses the reaction dUMP + (6R)-5,10-methylene-5,6,7,8-tetrahydrofolate = 7,8-dihydrofolate + dTMP. Its pathway is pyrimidine metabolism; dTTP biosynthesis. Catalyzes the reductive methylation of 2'-deoxyuridine-5'-monophosphate (dUMP) to 2'-deoxythymidine-5'-monophosphate (dTMP) while utilizing 5,10-methylenetetrahydrofolate (mTHF) as the methyl donor and reductant in the reaction, yielding dihydrofolate (DHF) as a by-product. This enzymatic reaction provides an intracellular de novo source of dTMP, an essential precursor for DNA biosynthesis. The polypeptide is Thymidylate synthase (Streptococcus thermophilus (strain ATCC BAA-250 / LMG 18311)).